The primary structure comprises 87 residues: RNA-binding protein Hfq (87 aa).

Residues 9 to 68 form the Sm domain; that stretch reads DPFLNALRRERIPVSIFLVNGIKLQGKIQSFDQFVILLENTVNQMVYKHAISTVVPARAV.

Belongs to the Hfq family. Homohexamer.

Functionally, RNA chaperone that binds small regulatory RNA (sRNAs) and mRNAs to facilitate mRNA translational regulation in response to envelope stress, environmental stress and changes in metabolite concentrations. Also binds with high specificity to tRNAs. This is RNA-binding protein Hfq from Pseudoalteromonas translucida (strain TAC 125).